Here is a 253-residue protein sequence, read N- to C-terminus: Major prion protein (253 aa).

A signal peptide spans 1–22 (MANLGCWMLVLFVATWSDLGLC). An interaction with ADGRG6 region spans residues 23 to 38 (KKRPKPGGWNTGGSRY). The interaction with GRB2, ERI3 and SYN1 stretch occupies residues 23–230 (KKRPKPGGWN…ESQAYYQRGS (208 aa)). Positions 26 to 108 (PKPGGWNTGG…WNKPSKPKTS (83 aa)) are disordered. 5 tandem repeats follow at residues 51-59 (PQGGGGWGQ), 60-67 (PHGGGWGQ), 68-75 (PHGGGWGQ), 76-83 (PHGGGWGQ), and 84-91 (PHGGGWGQ). Residues 51 to 91 (PQGGGGWGQPHGGGWGQPHGGGWGQPHGGGWGQPHGGGWGQ) are 5 X 8 AA tandem repeats of P-H-G-G-G-W-G-Q. The span at 52–95 (QGGGGWGQPHGGGWGQPHGGGWGQPHGGGWGQPHGGGWGQGGGT) shows a compositional bias: gly residues. His-61, Gly-62, Gly-63, His-69, Gly-70, Gly-71, His-77, Gly-78, Gly-79, His-85, Gly-86, and Gly-87 together coordinate Cu(2+). An intrachain disulfide couples Cys-179 to Cys-214. Asn-181 and Asn-197 each carry an N-linked (GlcNAc...) asparagine glycan. Ser-230 carries the GPI-anchor amidated serine lipid modification. A propeptide spans 231–253 (SMVLFSSPPVILLISFLIFLIVG) (removed in mature form).

This sequence belongs to the prion family. In terms of assembly, monomer and homodimer. Has a tendency to aggregate into amyloid fibrils containing a cross-beta spine, formed by a steric zipper of superposed beta-strands. Soluble oligomers may represent an intermediate stage on the path to fibril formation. Copper binding may promote oligomerization. Interacts with GRB2, APP, ERI3/PRNPIP and SYN1. Mislocalized cytosolically exposed PrP interacts with MGRN1; this interaction alters MGRN1 subcellular location and causes lysosomal enlargement. Interacts with APP. Interacts with KIAA1191. Interacts with ADGRG6.

It is found in the cell membrane. It localises to the golgi apparatus. Its function is as follows. Its primary physiological function is unclear. May play a role in neuronal development and synaptic plasticity. May be required for neuronal myelin sheath maintenance. May promote myelin homeostasis through acting as an agonist for ADGRG6 receptor. May play a role in iron uptake and iron homeostasis. Soluble oligomers are toxic to cultured neuroblastoma cells and induce apoptosis (in vitro). Association with GPC1 (via its heparan sulfate chains) targets PRNP to lipid rafts. Also provides Cu(2+) or Zn(2+) for the ascorbate-mediated GPC1 deaminase degradation of its heparan sulfate side chains. This chain is Major prion protein (PRNP), found in Colobus guereza (Mantled guereza).